A 206-amino-acid chain; its full sequence is Peptidyl-tRNA hydrolase (206 aa).

Tyr-19 is a tRNA binding site. The active-site Proton acceptor is His-24. TRNA contacts are provided by Tyr-70, Asn-72, and Asn-118.

Belongs to the PTH family. As to quaternary structure, monomer.

The protein localises to the cytoplasm. It carries out the reaction an N-acyl-L-alpha-aminoacyl-tRNA + H2O = an N-acyl-L-amino acid + a tRNA + H(+). Its function is as follows. Hydrolyzes ribosome-free peptidyl-tRNAs (with 1 or more amino acids incorporated), which drop off the ribosome during protein synthesis, or as a result of ribosome stalling. In terms of biological role, catalyzes the release of premature peptidyl moieties from peptidyl-tRNA molecules trapped in stalled 50S ribosomal subunits, and thus maintains levels of free tRNAs and 50S ribosomes. This chain is Peptidyl-tRNA hydrolase, found in Prochlorococcus marinus (strain MIT 9313).